The chain runs to 229 residues: Potassium/proton antiporter CemA (229 aa).

3 helical membrane passes run 7-27 (LTPF…SLSF), 106-126 (IVLH…YYFL), and 189-209 (IISG…KYWI).

It belongs to the CemA family.

The protein resides in the plastid. The protein localises to the chloroplast inner membrane. The enzyme catalyses K(+)(in) + H(+)(out) = K(+)(out) + H(+)(in). Its function is as follows. Contributes to K(+)/H(+) antiport activity by supporting proton efflux to control proton extrusion and homeostasis in chloroplasts in a light-dependent manner to modulate photosynthesis. Prevents excessive induction of non-photochemical quenching (NPQ) under continuous-light conditions. Indirectly promotes efficient inorganic carbon uptake into chloroplasts. The protein is Potassium/proton antiporter CemA of Calycanthus floridus var. glaucus (Eastern sweetshrub).